We begin with the raw amino-acid sequence, 1411 residues long: Protein three rows (1411 aa).

Residues 1065-1071 are separase cleavage-site; sequence VEPIRKQ. Disordered regions lie at residues 1221 to 1240, 1268 to 1301, and 1330 to 1411; these read LEPP…NISP, VRPA…KSPK, and AKST…RHRN. Composition is skewed to low complexity over residues 1270 to 1289 and 1386 to 1398; these read PASS…NASS and TAEQ…TATP.

As to quaternary structure, interacts with pim and Sse. Cleavage of thr contributes to inactivation of Sse.

Its subcellular location is the cytoplasm. In terms of biological role, required specifically for chromosome disjunction during all mitoses; maternally provided protein is sufficient until mitosis 14 then zygotic protein is required. Involved in formation and/or maintenance of epithelial structures: bud extension during Malpighian tubule development, and foregut and hindgut morphogenesis. The protein is Protein three rows (thr) of Drosophila virilis (Fruit fly).